A 795-amino-acid chain; its full sequence is Delta-1-pyrroline-5-carboxylate synthase (795 aa).

Positions 1–361 (MLSQVYRCGF…FFSEVKPAGP (361 aa)) are glutamate 5-kinase. Residues S117, D223, and N246 each coordinate substrate. Residues 266–267 (SD) and 305–311 (MGGMEAK) contribute to the ATP site. Residues K311, K347, and K550 each carry the N6-succinyllysine modification. A gamma-glutamyl phosphate reductase region spans residues 362–795 (TVEQQGEMAR…NLPIPQRNTN (434 aa)).

It in the N-terminal section; belongs to the glutamate 5-kinase family. This sequence in the C-terminal section; belongs to the gamma-glutamyl phosphate reductase family. In terms of assembly, can form homodimers/multimers.

The protein localises to the mitochondrion. It is found in the mitochondrion matrix. It carries out the reaction L-glutamate + ATP = L-glutamyl 5-phosphate + ADP. The enzyme catalyses L-glutamate 5-semialdehyde + phosphate + NADP(+) = L-glutamyl 5-phosphate + NADPH + H(+). It participates in amino-acid biosynthesis; L-proline biosynthesis; L-glutamate 5-semialdehyde from L-glutamate: step 1/2. The protein operates within amino-acid biosynthesis; L-proline biosynthesis; L-glutamate 5-semialdehyde from L-glutamate: step 2/2. Its activity is regulated as follows. Isoform Short: Inhibited by L-ornithine with a Ki of approximately 0.25 mm. Isoform Long: Insensitive to ornithine inhibition. This is due to the two amino acid insert which abolishes feedback inhibition of P5CS activity by L-ornithine. Its function is as follows. Bifunctional enzyme that converts glutamate to glutamate 5-semialdehyde, an intermediate in the biosynthesis of proline, ornithine and arginine. This Homo sapiens (Human) protein is Delta-1-pyrroline-5-carboxylate synthase (ALDH18A1).